Reading from the N-terminus, the 337-residue chain is uncharacterized protein (337 aa).

2 helical membrane passes run 4 to 24 and 26 to 46; these read FIFFFKNYCYISGSMLLFSLI and LLLWIISLYCVGLVFWILFAL.

Belongs to the plectrovirus ORF2 family.

The protein localises to the host membrane. This is an uncharacterized protein from Spiroplasma melliferum (SpV1).